Here is a 156-residue protein sequence, read N- to C-terminus: ATP synthase subunit b (156 aa).

Residues 3-23 (ITLTIFAQALAFAGLIWIVAT) traverse the membrane as a helical segment.

This sequence belongs to the ATPase B chain family. As to quaternary structure, F-type ATPases have 2 components, F(1) - the catalytic core - and F(0) - the membrane proton channel. F(1) has five subunits: alpha(3), beta(3), gamma(1), delta(1), epsilon(1). F(0) has three main subunits: a(1), b(2) and c(10-14). The alpha and beta chains form an alternating ring which encloses part of the gamma chain. F(1) is attached to F(0) by a central stalk formed by the gamma and epsilon chains, while a peripheral stalk is formed by the delta and b chains.

It is found in the cell inner membrane. In terms of biological role, f(1)F(0) ATP synthase produces ATP from ADP in the presence of a proton or sodium gradient. F-type ATPases consist of two structural domains, F(1) containing the extramembraneous catalytic core and F(0) containing the membrane proton channel, linked together by a central stalk and a peripheral stalk. During catalysis, ATP synthesis in the catalytic domain of F(1) is coupled via a rotary mechanism of the central stalk subunits to proton translocation. Component of the F(0) channel, it forms part of the peripheral stalk, linking F(1) to F(0). This chain is ATP synthase subunit b, found in Xanthomonas campestris pv. campestris (strain 8004).